The primary structure comprises 361 residues: Histidinol-phosphate aminotransferase (361 aa).

N6-(pyridoxal phosphate)lysine is present on Lys-219.

Belongs to the class-II pyridoxal-phosphate-dependent aminotransferase family. Histidinol-phosphate aminotransferase subfamily. As to quaternary structure, homodimer. Pyridoxal 5'-phosphate is required as a cofactor.

It catalyses the reaction L-histidinol phosphate + 2-oxoglutarate = 3-(imidazol-4-yl)-2-oxopropyl phosphate + L-glutamate. It functions in the pathway amino-acid biosynthesis; L-histidine biosynthesis; L-histidine from 5-phospho-alpha-D-ribose 1-diphosphate: step 7/9. In Cereibacter sphaeroides (strain ATCC 17029 / ATH 2.4.9) (Rhodobacter sphaeroides), this protein is Histidinol-phosphate aminotransferase.